Reading from the N-terminus, the 381-residue chain is Guanine nucleotide-binding protein subunit alpha-12 (381 aa).

The S-palmitoyl cysteine moiety is linked to residue Cys-11. Positions 56–381 (RLVKILLLGA…QENLKDIMLQ (326 aa)) constitute a G-alpha domain. Residues 59–72 (KILLLGAGESGKST) form a G1 motif region. GTP is bound by residues 67–72 (ESGKST) and 202–205 (LLAR). Ser-71 provides a ligand contact to Mg(2+). The G2 motif stretch occupies residues 200 to 208 (DILLARKAT). Thr-208 serves as a coordination point for Mg(2+). Phosphothreonine is present on Thr-208. Positions 223–232 (FKMVDVGGQR) are G3 motif. The tract at residues 292–299 (ILFLNKMD) is G4 motif. Residues 296 to 299 (NKMD) and Ala-353 each bind GTP. The G5 motif stretch occupies residues 351-356 (TTAIDT).

This sequence belongs to the G-alpha family. G(12) subfamily. As to quaternary structure, g proteins are composed of 3 units; alpha, beta and gamma. The alpha chain contains the guanine nucleotide binding site. Interacts with UBXD5. Interacts (in GTP-bound form) with PPP5C (via TPR repeats); activates PPP5C phosphatase activity and translocates PPP5C to the cell membrane. Interacts with RGS22. Interacts (via N-terminus) with NAPA; the interaction promotes CDH5 localization to plasma membrane. Interacts with CTNND1 (via N-terminus); the interaction regulates CDH1-mediated cell-cell adhesion. Interacts with PPP2R1A; the interaction promotes protein phosphatase 2A activation causing dephosphorylation of MAPT. Interacts (in GTP-bound form) with ARHGEF1. Interacts (in GTP-bound form) with ARHGEF11 (via RGS domain). Interacts (in GTP-bound form) with ARHGEF12 (via RGS domain).

It is found in the cell membrane. It localises to the lateral cell membrane. The protein resides in the cytoplasm. Guanine nucleotide-binding proteins (G proteins) are involved as modulators or transducers in various transmembrane signaling systems. Activates effector molecule RhoA by binding and activating RhoGEFs (ARHGEF12/LARG). GNA12-dependent Rho signaling subsequently regulates transcription factor AP-1 (activating protein-1). GNA12-dependent Rho signaling also regulates protein phosphatese 2A activation causing dephosphorylation of its target proteins. Promotes tumor cell invasion and metastasis by activating RhoA/ROCK signaling pathway and up-regulating pro-inflammatory cytokine production. Inhibits CDH1-mediated cell adhesion in process independent from Rho activation. Together with NAPA promotes CDH5 localization to plasma membrane. May play a role in the control of cell migration through the TOR signaling cascade. The chain is Guanine nucleotide-binding protein subunit alpha-12 (GNA12) from Homo sapiens (Human).